We begin with the raw amino-acid sequence, 379 residues long: Hydrogenase expression/formation protein HupD (379 aa).

Residues Cys-36, Cys-64, and Cys-67 each contribute to the Fe cation site.

This sequence belongs to the HypD family.

This Azotobacter chroococcum mcd 1 protein is Hydrogenase expression/formation protein HupD (hupD).